Here is a 356-residue protein sequence, read N- to C-terminus: S-adenosylmethionine:tRNA ribosyltransferase-isomerase (356 aa).

The protein belongs to the QueA family. As to quaternary structure, monomer.

Its subcellular location is the cytoplasm. It carries out the reaction 7-aminomethyl-7-carbaguanosine(34) in tRNA + S-adenosyl-L-methionine = epoxyqueuosine(34) in tRNA + adenine + L-methionine + 2 H(+). The protein operates within tRNA modification; tRNA-queuosine biosynthesis. Functionally, transfers and isomerizes the ribose moiety from AdoMet to the 7-aminomethyl group of 7-deazaguanine (preQ1-tRNA) to give epoxyqueuosine (oQ-tRNA). The protein is S-adenosylmethionine:tRNA ribosyltransferase-isomerase of Escherichia coli O1:K1 / APEC.